A 264-amino-acid chain; its full sequence is Diphthine synthase (264 aa).

S-adenosyl-L-methionine contacts are provided by residues leucine 10, aspartate 87, valine 90, 115-116 (SI), leucine 166, alanine 209, and histidine 234.

Belongs to the diphthine synthase family. In terms of assembly, homodimer.

The enzyme catalyses 2-[(3S)-amino-3-carboxypropyl]-L-histidyl-[translation elongation factor 2] + 3 S-adenosyl-L-methionine = diphthine-[translation elongation factor 2] + 3 S-adenosyl-L-homocysteine + 3 H(+). It participates in protein modification; peptidyl-diphthamide biosynthesis. Functionally, S-adenosyl-L-methionine-dependent methyltransferase that catalyzes the trimethylation of the amino group of the modified target histidine residue in translation elongation factor 2 (EF-2), to form an intermediate called diphthine. The three successive methylation reactions represent the second step of diphthamide biosynthesis. The chain is Diphthine synthase from Thermococcus gammatolerans (strain DSM 15229 / JCM 11827 / EJ3).